The primary structure comprises 544 residues: CTP synthase (544 aa).

The amidoligase domain stretch occupies residues 1–265 (MTKFIFVTGG…DNIITEQLQL (265 aa)). Ser13 serves as a coordination point for CTP. Ser13 lines the UTP pocket. ATP contacts are provided by residues 14 to 19 (SLGKGI) and Asp71. Residues Asp71 and Glu139 each contribute to the Mg(2+) site. CTP contacts are provided by residues 146–148 (DIE), 186–191 (KTKPTQ), and Lys222. UTP-binding positions include 186–191 (KTKPTQ) and Lys222. Positions 290 to 544 (KIAMVGKYVD…VKAALNNKKA (255 aa)) constitute a Glutamine amidotransferase type-1 domain. An L-glutamine-binding site is contributed by Gly353. Cys380 (nucleophile; for glutamine hydrolysis) is an active-site residue. L-glutamine is bound by residues 381–384 (LGMQ), Glu404, and Arg471. Catalysis depends on residues His517 and Glu519.

Belongs to the CTP synthase family. Homotetramer.

The catalysed reaction is UTP + L-glutamine + ATP + H2O = CTP + L-glutamate + ADP + phosphate + 2 H(+). The enzyme catalyses L-glutamine + H2O = L-glutamate + NH4(+). It carries out the reaction UTP + NH4(+) + ATP = CTP + ADP + phosphate + 2 H(+). The protein operates within pyrimidine metabolism; CTP biosynthesis via de novo pathway; CTP from UDP: step 2/2. Its activity is regulated as follows. Allosterically activated by GTP, when glutamine is the substrate; GTP has no effect on the reaction when ammonia is the substrate. The allosteric effector GTP functions by stabilizing the protein conformation that binds the tetrahedral intermediate(s) formed during glutamine hydrolysis. Inhibited by the product CTP, via allosteric rather than competitive inhibition. Its function is as follows. Catalyzes the ATP-dependent amination of UTP to CTP with either L-glutamine or ammonia as the source of nitrogen. Regulates intracellular CTP levels through interactions with the four ribonucleotide triphosphates. The polypeptide is CTP synthase (Neisseria gonorrhoeae (strain ATCC 700825 / FA 1090)).